An 874-amino-acid polypeptide reads, in one-letter code: Oxysterol-binding protein-related protein 5 (874 aa).

Residues 1–71 form a disordered region; it reads MKEEAFLRRR…PQTPGSATKV (71 aa). Residue Ser-12 is modified to Phosphoserine. The stretch at 93–123 forms a coiled coil; the sequence is VSKKDALKAQKENYRQEKKRATKQLFSALTD. The 118-residue stretch at 126–243 folds into the PH domain; that stretch reads VVIMADSLKI…WLDALELALR (118 aa). Disordered regions lie at residues 255 to 277 and 299 to 338; these read QGRD…GLPT and FSDK…GPWR. Residues 261–277 are compositionally biased toward polar residues; it reads QGSSPDASPSSLYGLPT. Residues 299–308 are compositionally biased toward basic and acidic residues; that stretch reads FSDKSERENA. Residues 383 to 388, 445 to 448, and 477 to 478 each bind a 1,2-diacyl-sn-glycero-3-phospho-(1D-myo-inositol 4-phosphate); these read LSRVVL, KPYN, and HH. Residues 383 to 388 and Asn-448 each bind a 1,2-diacyl-sn-glycero-3-phospho-L-serine; that span reads LSRVVL. Ser-503 serves as a coordination point for a 1,2-diacyl-sn-glycero-3-phospho-L-serine. The span at 660 to 684 shows a compositional bias: basic and acidic residues; the sequence is GDQHKATQEKSVLEEAQRQRAREHQ. Disordered regions lie at residues 660-685 and 739-798; these read GDQH…EHQQ and GQTT…GGES. 3 residues coordinate a 1,2-diacyl-sn-glycero-3-phospho-(1D-myo-inositol 4-phosphate): Lys-669, Glu-673, and Arg-677. 2 positions are modified to phosphoserine: Ser-746 and Ser-749. Basic and acidic residues predominate over residues 754–764; that stretch reads PSSDRRLRKAS. Residues 765 to 782 are compositionally biased toward polar residues; sequence DQPSGHSQVTESSGSTPE. Residues 855–873 traverse the membrane as a helical segment; that stretch reads SWFLLCIFLTCQLFINYIL.

This sequence belongs to the OSBP family.

It localises to the endoplasmic reticulum membrane. In terms of biological role, lipid transporter involved in lipid countertransport between the endoplasmic reticulum and the plasma membrane: specifically exchanges phosphatidylserine with phosphatidylinositol 4-phosphate (PI4P), delivering phosphatidylserine to the plasma membrane in exchange for PI4P, which is degraded by the SAC1/SACM1L phosphatase in the endoplasmic reticulum. Binds phosphatidylserine and PI4P in a mutually exclusive manner. May cooperate with NPC1 to mediate the exit of cholesterol from endosomes/lysosomes. Binds 25-hydroxycholesterol and cholesterol. The polypeptide is Oxysterol-binding protein-related protein 5 (Osbpl5) (Mus musculus (Mouse)).